A 473-amino-acid chain; its full sequence is Zinc finger and SCAN domain-containing protein 21 (473 aa).

Residue lysine 27 forms a Glycyl lysine isopeptide (Lys-Gly) (interchain with G-Cter in SUMO2) linkage. The 83-residue stretch at 45–127 folds into the SCAN box domain; it reads RQRFRQFGYH…TLLEDLEREL (83 aa). The tract at residues 127 to 169 is disordered; sequence LDEPGHQVSTPPNEQKPVWEKISSSGTAKESPSSMQPQPLETS. Residues 148–167 show a composition bias toward polar residues; that stretch reads ISSSGTAKESPSSMQPQPLE. Residues lysine 221 and lysine 232 each participate in a glycyl lysine isopeptide (Lys-Gly) (interchain with G-Cter in SUMO2) cross-link. The disordered stretch occupies residues 244 to 272; it reads LENEKGTKPPLQEAGSKKGRESVPTKPTP. Residues 258-272 are compositionally biased toward basic and acidic residues; the sequence is GSKKGRESVPTKPTP. 7 C2H2-type zinc fingers span residues 277-299, 305-327, 333-354, 360-382, 388-410, 416-438, and 444-466; these read YICAECGKAFSNSSNLTKHRRTH, YVCTKCGKAFSHSSNLTLHYRTH, YDCKCGKAFGQSSDLLKHQRMH, YQCKDCGKAFSGKGSLIRHYRIH, YQCNECGKSFSQHAGLSSHQRLH, YKCKECGKAFNHSSNFNKHHRIH, and YWCHHCGKTFCSKSNLSKHQRVH. Lysine 349 is covalently cross-linked (Glycyl lysine isopeptide (Lys-Gly) (interchain with G-Cter in SUMO2)).

The protein belongs to the krueppel C2H2-type zinc-finger protein family.

It is found in the nucleus. In terms of biological role, strong transcriptional activator. Plays an important role in spermatogenesis; essential for the progression of meiotic prophase I in spermatocytes. This is Zinc finger and SCAN domain-containing protein 21 (ZSCAN21) from Homo sapiens (Human).